The chain runs to 169 residues: uncharacterized protein (169 aa).

It localises to the mitochondrion. This is an uncharacterized protein from Marchantia polymorpha (Common liverwort).